Consider the following 1309-residue polypeptide: Angiotensin-converting enzyme (1309 aa).

The signal sequence occupies residues 1 to 33; that stretch reads MGAASGCRWPWPPLLPLLLMLLLPPPPLPVALA. The Extracellular segment spans residues 34–1259; sequence LDSALQPGNF…GLNLEEQQAR (1226 aa). Residues asparagine 42, asparagine 58, asparagine 78, asparagine 115, asparagine 135, asparagine 150, and asparagine 164 are each glycosylated (N-linked (GlcNAc...) asparagine). Peptidase M2 domains are found at residues 44 to 627 and 646 to 1225; these read TADE…LGWP and VSDE…LGWP. Cysteine 161 and cysteine 169 form a disulfide bridge. Residue tyrosine 235 participates in chloride binding. N-linked (GlcNAc...) asparagine glycosylation occurs at asparagine 322. The cysteines at positions 363 and 381 are disulfide-linked. Histidine 394 contributes to the Zn(2+) binding site. The Proton acceptor 1 role is filled by glutamate 395. Zn(2+) contacts are provided by histidine 398 and glutamate 422. Asparagine 512 carries N-linked (GlcNAc...) asparagine glycosylation. Histidine 523 acts as the Proton donor 1 in catalysis. N-linked (GlcNAc...) asparagine glycosylation occurs at asparagine 526. Arginine 532 is a binding site for chloride. Cysteine 548 and cysteine 560 are oxidised to a cystine. Residues asparagine 680, asparagine 698, asparagine 717, and asparagine 763 are each glycosylated (N-linked (GlcNAc...) asparagine). Cysteine 760 and cysteine 766 form a disulfide bridge. Positions 794 and 832 each coordinate chloride. Asparagine 945 carries N-linked (GlcNAc...) asparagine glycosylation. Cysteine 960 and cysteine 978 are disulfide-bonded. Histidine 991 serves as a coordination point for Zn(2+). Glutamate 992 (proton acceptor 2) is an active-site residue. 2 residues coordinate Zn(2+): histidine 995 and glutamate 1019. Chloride-binding residues include tryptophan 1093 and arginine 1097. The active-site Proton donor 2 is the histidine 1121. Arginine 1130 is a chloride binding site. A disulfide bridge connects residues cysteine 1146 and cysteine 1158. N-linked (GlcNAc...) asparagine glycosylation is found at asparagine 1194 and asparagine 1228. The segment at 1218-1259 is juxtamembrane stalk; that stretch reads HGEKLGWPQYNWTPNSARLEGSFAGTGRVNFLGLNLEEQQAR. The helical transmembrane segment at 1260-1280 threads the bilayer; that stretch reads VGQWVLLFLGVTLLVATMGLT. At 1281-1309 the chain is on the cytoplasmic side; that stretch reads QRLFSIRHQILRRTHRGPQFGSEVELRHS. Position 1302 is a phosphoserine (serine 1302).

This sequence belongs to the peptidase M2 family. Monomer and homodimer; homodimerizes following binding to an inhibitor. Interacts with calmodulin (CALM1, CALM2 or CALM3); interaction takes place in the cytoplasmic region and regulates phosphorylation and proteolytic cleavage. Zn(2+) serves as cofactor. It depends on chloride as a cofactor. Post-translationally, produced following proteolytic cleavage by secretase enzymes that cleave the transmembrane form in the juxtamembrane stalk region upstream of the transmembrane region. Cleavage can take place at different sites of the juxtamembrane stalk region. In terms of processing, phosphorylated by CK2 on Ser-1302; which allows membrane retention. Phosphorylated on tyrosine residues on its extracellular part, promoting cleavage by secretase enzymes and formation of the soluble form (Angiotensin-converting enzyme, soluble form).

It is found in the cell membrane. The protein localises to the cytoplasm. It localises to the secreted. The catalysed reaction is Release of a C-terminal dipeptide, oligopeptide-|-Xaa-Yaa, when Xaa is not Pro, and Yaa is neither Asp nor Glu. Thus, conversion of angiotensin I to angiotensin II, with increase in vasoconstrictor activity, but no action on angiotensin II.. It carries out the reaction angiotensin I + H2O = L-histidyl-L-leucine + angiotensin II. It catalyses the reaction bradykinin + H2O = L-Phe-L-Arg + bradykinin(1-7). The enzyme catalyses substance P + H2O = substance P(1-9) + L-Leu-L-Met-NH2. The catalysed reaction is substance P + H2O = substance P(1-8) + Gly-L-Leu-L-Met-NH2. It carries out the reaction substance P + H2O = L-Phe-L-Phe-Gly-L-Leu-L-Met-NH2 + substance P(1-6). It catalyses the reaction neurotensin + H2O = neurotensin(1-11) + L-isoleucyl-L-leucine. The enzyme catalyses goralatide + H2O = N-acetyl-L-seryl-L-aspartate + L-lysyl-L-proline. The catalysed reaction is Met-enkephalin + H2O = L-phenylalanyl-L-methionine + L-tyrosylglycylglycine. It carries out the reaction Leu-enkephalin + H2O = L-tyrosylglycylglycine + L-phenylalanyl-L-leucine. It catalyses the reaction Met-enkephalin-Arg-Phe + H2O = L-arginyl-L-phenylalanine + Met-enkephalin. With respect to regulation, the dipeptidyl carboxypeptidase activity is strongly activated by chloride. The dipeptidyl carboxypeptidase activity is specifically inhibited by lisinopril, captopril and enalaprilat. Functionally, dipeptidyl carboxypeptidase that removes dipeptides from the C-terminus of a variety of circulating hormones, such as angiotensin I, bradykinin or enkephalins, thereby playing a key role in the regulation of blood pressure, electrolyte homeostasis or synaptic plasticity. Composed of two similar catalytic domains, each possessing a functional active site, with different selectivity for substrates. Plays a major role in the angiotensin-renin system that regulates blood pressure and sodium retention by the kidney by converting angiotensin I to angiotensin II, resulting in an increase of the vasoconstrictor activity of angiotensin. Also able to inactivate bradykinin, a potent vasodilator, and therefore enhance the blood pressure response. Acts as a regulator of synaptic transmission by mediating cleavage of neuropeptide hormones, such as substance P, neurotensin or enkephalins. Catalyzes degradation of different enkephalin neuropeptides (Met-enkephalin, Leu-enkephalin, Met-enkephalin-Arg-Phe and possibly Met-enkephalin-Arg-Gly-Leu). Acts as a regulator of synaptic plasticity in the nucleus accumbens of the brain by mediating cleavage of Met-enkephalin-Arg-Phe, a strong ligand of Mu-type opioid receptor OPRM1, into Met-enkephalin. Met-enkephalin-Arg-Phe cleavage by ACE decreases activation of OPRM1, leading to long-term synaptic potentiation of glutamate release. Also acts as a regulator of hematopoietic stem cell differentiation by mediating degradation of hemoregulatory peptide N-acetyl-SDKP (AcSDKP). Acts as a regulator of cannabinoid signaling pathway by mediating degradation of hemopressin, an antagonist peptide of the cannabinoid receptor CNR1. Involved in amyloid-beta metabolism by catalyzing degradation of Amyloid-beta protein 40 and Amyloid-beta protein 42 peptides, thereby preventing plaque formation. Catalyzes cleavage of cholecystokinin (maturation of Cholecystokinin-8 and Cholecystokinin-5) and Gonadoliberin-1 (both maturation and degradation) hormones. Degradation of hemoregulatory peptide N-acetyl-SDKP (AcSDKP) and amyloid-beta proteins is mediated by the N-terminal catalytic domain, while angiotensin I and cholecystokinin cleavage is mediated by the C-terminal catalytic region. In terms of biological role, soluble form that is released in blood plasma and other body fluids following proteolytic cleavage in the juxtamembrane stalk region. The polypeptide is Angiotensin-converting enzyme (Sus scrofa (Pig)).